Here is a 1010-residue protein sequence, read N- to C-terminus: Phosphatidylserine decarboxylase proenzyme 2 (1010 aa).

C2 domains lie at 1–114 and 247–370; these read MSQA…SSWE and DFES…DKPC. Residues Asp-342, Ser-345, and Asp-348 each contribute to the Ca(2+) site. One can recognise an EF-hand domain in the interval 458-493; that stretch reads LRRQLWMHLLQGNDTQMKGTLDLIELNYFVDCLGSN. Residues Asp-734, His-793, and Ser-880 each act as charge relay system; for autoendoproteolytic cleavage activity in the active site. Residue Ser-880 is the Schiff-base intermediate with substrate; via pyruvic acid; for decarboxylase activity of the active site. Position 880 is a pyruvic acid (Ser); by autocatalysis (Ser-880).

This sequence belongs to the phosphatidylserine decarboxylase family. PSD-B subfamily. Eukaryotic type II sub-subfamily. Heterodimer of a large membrane-associated beta subunit and a small pyruvoyl-containing alpha subunit. Interacts with pstB2. This interaction may be a means to structurally tether the donor membrane (ER) harboring PstB2 to acceptor membranes (Golgi/endosomes) harboring PSD2 during PtdSer transport to the site of PtdEtn synthesis. Pyruvate is required as a cofactor. Ca(2+) serves as cofactor. Is synthesized initially as an inactive proenzyme. Formation of the active enzyme involves a self-maturation process in which the active site pyruvoyl group is generated from an internal serine residue via an autocatalytic post-translational modification. Two non-identical subunits are generated from the proenzyme in this reaction, and the pyruvate is formed at the N-terminus of the alpha chain, which is derived from the carboxyl end of the proenzyme. The autoendoproteolytic cleavage occurs by a canonical serine protease mechanism, in which the side chain hydroxyl group of the serine supplies its oxygen atom to form the C-terminus of the beta chain, while the remainder of the serine residue undergoes an oxidative deamination to produce ammonia and the pyruvoyl prosthetic group on the alpha chain. During this reaction, the Ser that is part of the protease active site of the proenzyme becomes the pyruvoyl prosthetic group, which constitutes an essential element of the active site of the mature decarboxylase.

It is found in the golgi apparatus membrane. The protein resides in the endosome membrane. It carries out the reaction a 1,2-diacyl-sn-glycero-3-phospho-L-serine + H(+) = a 1,2-diacyl-sn-glycero-3-phosphoethanolamine + CO2. The protein operates within phospholipid metabolism; phosphatidylethanolamine biosynthesis; phosphatidylethanolamine from CDP-diacylglycerol: step 2/2. Catalyzes the formation of phosphatidylethanolamine (PtdEtn) from phosphatidylserine (PtdSer). Plays a central role in phospholipid metabolism and in the interorganelle trafficking of phosphatidylserine. This is Phosphatidylserine decarboxylase proenzyme 2 from Komagataella phaffii (strain GS115 / ATCC 20864) (Yeast).